The primary structure comprises 175 residues: Adenine phosphoribosyltransferase (175 aa).

The protein belongs to the purine/pyrimidine phosphoribosyltransferase family. In terms of assembly, homodimer.

The protein localises to the cytoplasm. The enzyme catalyses AMP + diphosphate = 5-phospho-alpha-D-ribose 1-diphosphate + adenine. It functions in the pathway purine metabolism; AMP biosynthesis via salvage pathway; AMP from adenine: step 1/1. Catalyzes a salvage reaction resulting in the formation of AMP, that is energically less costly than de novo synthesis. The sequence is that of Adenine phosphoribosyltransferase from Francisella tularensis subsp. tularensis (strain WY96-3418).